We begin with the raw amino-acid sequence, 469 residues long: MNPNQKIITIGSVSLTIATICFLMQIAILVTTVTLHFKQYECSSPPNNQVMPCEPIIIERNITEIVYLTNTTIDKEICPKLVEYRNWSKPQCKITGFAPFSKDNSIRLSAGGGIWVTREPYVSCDPGKCYQFALGQGTTLDNKHSNDTIHDRTPYRTLLMNELGVPFHLGTRQVCIAWSSSSCHDGKAWLHVCVTGYDKNATASFIYDGRLVDSIGSWSKNILRTQESECVCINGTCTVVMTDGSASERADTKILFIEEGKIVHISPLSGSAQHVEECSCYPRYPGVRCVCRDNWKGSNRPVVDINVKDYSIVSSYVCSGLVGDTPRKNDRSSSSYCRNPNNEKGNHGVKGWAFDDGNDVWMGRTISEESRSGYETFKVIGGWSTPNSKLQINRQVIVDSDNRSGYSGIFSVEGKSCINRCFYVELIRGREQETRVWWTSNSIVVFCGTSGTYGTGSWPDGADINLMPI.

At methionine 1 to threonine 9 the chain is on the intravirion side. Residues isoleucine 10–valine 30 traverse the membrane as a helical segment. The segment at glycine 11–valine 33 is involved in apical transport and lipid raft association. The Virion surface portion of the chain corresponds to threonine 31–isoleucine 469. Positions histidine 36 to serine 88 are hypervariable stalk region. N-linked (GlcNAc...) asparagine; by host glycosylation is found at asparagine 61, asparagine 70, and asparagine 86. The head of neuraminidase stretch occupies residues glutamine 91–isoleucine 469. 8 disulfides stabilise this stretch: cysteine 92/cysteine 417, cysteine 124/cysteine 129, cysteine 183/cysteine 230, cysteine 232/cysteine 237, cysteine 278/cysteine 291, cysteine 280/cysteine 289, cysteine 318/cysteine 337, and cysteine 421/cysteine 447. Substrate is bound at residue arginine 118. An N-linked (GlcNAc...) asparagine; by host glycan is attached at asparagine 146. Aspartate 151 serves as the catalytic Proton donor/acceptor. Arginine 152 lines the substrate pocket. N-linked (GlcNAc...) asparagine; by host glycans are attached at residues asparagine 200 and asparagine 234. Residue glutamate 276 to glutamate 277 coordinates substrate. A substrate-binding site is contributed by arginine 292. Residues aspartate 293, glycine 297, and aspartate 324 each contribute to the Ca(2+) site. Arginine 371 is a substrate binding site. Residue asparagine 402 is glycosylated (N-linked (GlcNAc...) asparagine; by host). The active-site Nucleophile is tyrosine 406.

The protein belongs to the glycosyl hydrolase 34 family. Homotetramer. Requires Ca(2+) as cofactor. N-glycosylated.

Its subcellular location is the virion membrane. The protein resides in the host apical cell membrane. It catalyses the reaction Hydrolysis of alpha-(2-&gt;3)-, alpha-(2-&gt;6)-, alpha-(2-&gt;8)- glycosidic linkages of terminal sialic acid residues in oligosaccharides, glycoproteins, glycolipids, colominic acid and synthetic substrates.. With respect to regulation, inhibited by the neuraminidase inhibitors zanamivir (Relenza) and oseltamivir (Tamiflu). These drugs interfere with the release of progeny virus from infected cells and are effective against all influenza strains. Resistance to neuraminidase inhibitors is quite rare. Its function is as follows. Catalyzes the removal of terminal sialic acid residues from viral and cellular glycoconjugates. Cleaves off the terminal sialic acids on the glycosylated HA during virus budding to facilitate virus release. Additionally helps virus spread through the circulation by further removing sialic acids from the cell surface. These cleavages prevent self-aggregation and ensure the efficient spread of the progeny virus from cell to cell. Otherwise, infection would be limited to one round of replication. Described as a receptor-destroying enzyme because it cleaves a terminal sialic acid from the cellular receptors. May facilitate viral invasion of the upper airways by cleaving the sialic acid moieties on the mucin of the airway epithelial cells. Likely to plays a role in the budding process through its association with lipid rafts during intracellular transport. May additionally display a raft-association independent effect on budding. Plays a role in the determination of host range restriction on replication and virulence. Sialidase activity in late endosome/lysosome traffic seems to enhance virus replication. This is Neuraminidase from Aves (whales).